The primary structure comprises 121 residues: Large ribosomal subunit protein mL52 (121 aa).

The transit peptide at 1 to 22 (MAALGTWLSSVRRLHCSVVARA) directs the protein to the mitochondrion. The span at 98 to 109 (QEERKKEHDLKP) shows a compositional bias: basic and acidic residues. The tract at residues 98-121 (QEERKKEHDLKPKGTLLRSPLPNQ) is disordered.

The protein belongs to the mitochondrion-specific ribosomal protein mL52 family. Component of the mitochondrial ribosome large subunit (39S) which comprises a 16S rRNA and about 50 distinct proteins.

It is found in the mitochondrion. This is Large ribosomal subunit protein mL52 (Mrpl52) from Mus musculus (Mouse).